The sequence spans 377 residues: Cytochrome b (377 aa).

Helical transmembrane passes span Phe33–Met53, Trp77–Thr98, Trp113–Leu133, and Phe178–Leu198. Heme b is bound by residues His83 and His97. Residues His182 and His196 each contribute to the heme b site. Residue His201 coordinates a ubiquinone. The next 4 membrane-spanning stretches (helical) occupy residues Tyr226–Ser246, Leu288–Ser308, Phe320–Ala340, and Phe347–Met367.

Belongs to the cytochrome b family. The main subunits of complex b-c1 are: cytochrome b, cytochrome c1 and the Rieske protein. Heme b serves as cofactor.

It is found in the mitochondrion inner membrane. Its function is as follows. Component of the ubiquinol-cytochrome c reductase complex (complex III or cytochrome b-c1 complex) that is part of the mitochondrial respiratory chain. The b-c1 complex mediates electron transfer from ubiquinol to cytochrome c. Contributes to the generation of a proton gradient across the mitochondrial membrane that is then used for ATP synthesis. The chain is Cytochrome b (MT-CYB) from Tetrodontophora bielanensis (Giant springtail).